The primary structure comprises 644 residues: Threonine--tRNA ligase (644 aa).

The TGS domain maps to M1–F61. A catalytic region spans residues D241–P532. Zn(2+) is bound by residues C333, H384, and H509.

The protein belongs to the class-II aminoacyl-tRNA synthetase family. Homodimer. Requires Zn(2+) as cofactor.

Its subcellular location is the cytoplasm. The catalysed reaction is tRNA(Thr) + L-threonine + ATP = L-threonyl-tRNA(Thr) + AMP + diphosphate + H(+). In terms of biological role, catalyzes the attachment of threonine to tRNA(Thr) in a two-step reaction: L-threonine is first activated by ATP to form Thr-AMP and then transferred to the acceptor end of tRNA(Thr). Also edits incorrectly charged L-seryl-tRNA(Thr). This Nitratidesulfovibrio vulgaris (strain DSM 19637 / Miyazaki F) (Desulfovibrio vulgaris) protein is Threonine--tRNA ligase.